Consider the following 340-residue polypeptide: 4-dimethylallyltryptophan N-methyltransferase easF (340 aa).

The protein belongs to the methyltransferase superfamily. In terms of assembly, homodimer.

It carries out the reaction 4-(3-methylbut-2-enyl)-L-tryptophan + S-adenosyl-L-methionine = 4-(3-methylbut-2-enyl)-L-abrine + S-adenosyl-L-homocysteine + H(+). The protein operates within alkaloid biosynthesis; ergot alkaloid biosynthesis. Functionally, 4-dimethylallyltryptophan N-methyltransferase; part of the gene cluster that mediates the biosynthesis of fungal ergot alkaloid. DmaW catalyzes the first step of ergot alkaloid biosynthesis by condensing dimethylallyl diphosphate (DMAP) and tryptophan to form 4-dimethylallyl-L-tryptophan. The second step is catalyzed by the methyltransferase easF that methylates 4-dimethylallyl-L-tryptophan in the presence of S-adenosyl-L-methionine, resulting in the formation of 4-dimethylallyl-L-abrine. The catalase easC and the FAD-dependent oxidoreductase easE then transform 4-dimethylallyl-L-abrine to chanoclavine-I which is further oxidized by easD in the presence of NAD(+), resulting in the formation of chanoclavine-I aldehyde. Chanoclavine-I aldehyde is the precursor of ergoamides and ergopeptines in Clavicipitaceae, and clavine-type alcaloids such as fumiclavine in Trichocomaceae. However, the metabolites downstream of chanoclavine-I aldehyde in Arthrodermataceae have not been identified yet. In Arthroderma benhamiae (strain ATCC MYA-4681 / CBS 112371) (Trichophyton mentagrophytes), this protein is 4-dimethylallyltryptophan N-methyltransferase easF.